A 164-amino-acid chain; its full sequence is uncharacterized protein (164 aa).

This is an uncharacterized protein from Rickettsia bellii (strain RML369-C).